A 512-amino-acid chain; its full sequence is MEATDPSAEIELYTIPAQSSWFLWDDIHEIERREFAEFFTESSITRTPKVYKEYRDFIINKFREDTCRRLTFTSVRKFLVGDVNLLQKVFLFLEKWGLINFSSSLKKNDHLLSVDNAKIEQGTPAGIRVTATPNSLRPITAPPLVEERVETGIKVPPLTSYSDVFSDLKKPDHVLVCAHCGERCDSPFYQHNKGIVNICEKCFKNGNYGENNTADDFKLIGNSAAAVWTEEEILLLLESVLKHGDDWELISQSVSTKSRLDCISKLIELPFGEFLMGSASGRLNPSILTEDENTEQVQTDGQEHEETETREEKEDRVNEDEPPAKRKRVALISEGDSSLMKQVAAMASKVGPSVATAAAKAALAALCDEASCPKEIFDTDDYSNFTVDRANGEKDTDMEEQQEEKDGPQGLPVALRIRASVATALGAAAAQAKILADQEEREMEQLAATVIEQQLKKLQSKLKFLDDLESIMDEEEKVIEGVKETIIQERVSVLQCAFRSGITKRWDHTYVK.

The SWIRM domain occupies 13–110; the sequence is YTIPAQSSWF…FSSSLKKNDH (98 aa). Residues 223-274 form the SANT domain; sequence SAAAVWTEEEILLLLESVLKHGDDWELISQSVSTKSRLDCISKLIELPFGEF. The interval 291–325 is disordered; the sequence is DENTEQVQTDGQEHEETETREEKEDRVNEDEPPAK. Residues 424–488 are a coiled coil; sequence ALGAAAAQAK…IEGVKETIIQ (65 aa).

As to quaternary structure, homodimers and heterodimers. Interacts with SWI3B, SWI3C, BSH, and the C-terminus of FCA, but not with BRM or SWI3D. Expressed in roots, stems, leaves and flowers, but not in siliques.

The protein resides in the nucleus. In terms of biological role, component of a multiprotein complex equivalent of the SWI/SNF complex, an ATP-dependent chromatin-remodeling complex, which is required for the positive and negative regulation of gene expression of a large number of genes. It changes chromatin structure by altering DNA-histone contacts within a nucleosome, leading eventually to a change in nucleosome position, thus facilitating or repressing binding of gene-specific transcription factors. The chain is SWI/SNF complex subunit SWI3A (SWI3A) from Arabidopsis thaliana (Mouse-ear cress).